A 412-amino-acid chain; its full sequence is Putative competence-damage inducible protein (412 aa).

It belongs to the CinA family.

The sequence is that of Putative competence-damage inducible protein from Bacillus cereus (strain ATCC 10987 / NRS 248).